Here is a 211-residue protein sequence, read N- to C-terminus: Lipoprotein signal peptidase (211 aa).

3 helical membrane passes run 12–32, 96–116, and 127–147; these read LLALLFVTLVAIDQWTKYLAV, AFRNGFFTLVSLGAVAFILHY, and LQVALALVLSGAVGNFLDRLA. Residues D153 and D174 contribute to the active site. A helical membrane pass occupies residues 167–187; it reads WPTFNIADSLIVVGVALLVLH.

The protein belongs to the peptidase A8 family.

Its subcellular location is the cell inner membrane. It catalyses the reaction Release of signal peptides from bacterial membrane prolipoproteins. Hydrolyzes -Xaa-Yaa-Zaa-|-(S,diacylglyceryl)Cys-, in which Xaa is hydrophobic (preferably Leu), and Yaa (Ala or Ser) and Zaa (Gly or Ala) have small, neutral side chains.. Its pathway is protein modification; lipoprotein biosynthesis (signal peptide cleavage). In terms of biological role, this protein specifically catalyzes the removal of signal peptides from prolipoproteins. In Anaeromyxobacter sp. (strain Fw109-5), this protein is Lipoprotein signal peptidase.